The following is a 432-amino-acid chain: MMEKLKEIEKVTKAIKEKILNHYGYIRVITHHDTDGLSSGGILAKMLMRTNKLFHLTVVEHLSKEVIEKLAKENEVNKPLFIFADMGSGQIEEIIKHNFNAIILDHHPPVIKDSFINENIIQLNPHIFGVDGSREITASGVCYLVAREFGYYDLSVLAIVGIIGDMQYNPLLGLNKFIVNEAREYRYVKIMNDIVYNIYDVEIYKAIAYCTKPYIPDLASEGKAFKFLKDIGIDPNKKQLDDTDKKKLLSAIIFKYPKIENLLIDRYLIEHKVRDAFLLSEMLNAVGRNGLFAVGIGICLEDDECIKIGNQILWEYKKNLINELKSVKLKKLNNIYYFEGKKGMIGIIASILVDDKPVIGYHIEGDIAKFSARGNRDLVNRGLNLSVAMAVAKEFGGNGGGHDVASGAVVSKDKVQEFLKRVDEIIGEQLRR.

The protein to M.jannaschii MJ0977.

This is an uncharacterized protein from Methanocaldococcus jannaschii (strain ATCC 43067 / DSM 2661 / JAL-1 / JCM 10045 / NBRC 100440) (Methanococcus jannaschii).